Consider the following 194-residue polypeptide: Dihydrofolate reductase HdrB (194 aa).

Residues 18–194 (RFVLVAAVAD…ADRGAEESDE (177 aa)) enclose the DHFR domain. Residues alanine 24 and 30–36 (VIGRDGT) each bind NADP(+). Aspartate 44 is a binding site for substrate. Residue 62-63 (KT) participates in NADP(+) binding. Substrate-binding residues include arginine 69 and arginine 78. Residues 84–85 (TT) and 123–130 (GGATVYEQ) each bind NADP(+). Threonine 141 serves as a coordination point for substrate. The segment at 173 to 194 (SFVTYERKQPAAADRGAEESDE) is disordered.

The protein belongs to the dihydrofolate reductase family.

It catalyses the reaction (6S)-5,6,7,8-tetrahydrofolate + NADP(+) = 7,8-dihydrofolate + NADPH + H(+). Its pathway is cofactor biosynthesis; tetrahydrofolate biosynthesis; 5,6,7,8-tetrahydrofolate from 7,8-dihydrofolate: step 1/1. Its activity is regulated as follows. Maximum activity at KCl concentration of 0.5 M and activity decreases with increasing concentration of KCl. In terms of biological role, key enzyme in folate metabolism. Catalyzes an essential reaction for de novo glycine and purine synthesis, and for DNA precursor synthesis. In Haloferax volcanii (Halobacterium volcanii), this protein is Dihydrofolate reductase HdrB (hdrB).